The chain runs to 140 residues: Profilin-1 (140 aa).

An N-acetylalanine modification is found at alanine 2. Residue serine 28 is modified to Phosphoserine. Lysine 54 is covalently cross-linked (Glycyl lysine isopeptide (Lys-Gly) (interchain with G-Cter in SUMO2); alternate). A Glycyl lysine isopeptide (Lys-Gly) (interchain with G-Cter in ubiquitin); alternate cross-link involves residue lysine 54. A phosphoserine mark is found at serine 57 and serine 85. Lysine 105 and lysine 108 each carry N6-acetyllysine. Residue tyrosine 129 is modified to Phosphotyrosine. Serine 138 is subject to Phosphoserine; by ROCK1.

Belongs to the profilin family. Found in a complex with XPO6, Ran, ACTB and PFN1. Interacts with ACTB. Interacts with VASP. Interacts with HTT. Interacts with SH3BGRL. Occurs in many kinds of cells as a complex with monomeric actin in a 1:1 ratio. Interacts with ACTMAP. Post-translationally, phosphorylation at Ser-138 reduces its affinity for G-actin and blocks its interaction with HTT, reducing its ability to inhibit androgen receptor (AR) and HTT aggregation. Expressed in epididymis (at protein level).

The protein resides in the cytoplasm. It localises to the cytoskeleton. Binds to actin and affects the structure of the cytoskeleton. At high concentrations, profilin prevents the polymerization of actin, whereas it enhances it at low concentrations. By binding to PIP2, it inhibits the formation of IP3 and DG. Inhibits androgen receptor (AR) and HTT aggregation and binding of G-actin is essential for its inhibition of AR. The protein is Profilin-1 (PFN1) of Homo sapiens (Human).